A 128-amino-acid chain; its full sequence is Iron-sulfur cluster insertion protein ErpA (128 aa).

The iron-sulfur cluster site is built by Cys-56, Cys-120, and Cys-122.

This sequence belongs to the HesB/IscA family. As to quaternary structure, homodimer. Iron-sulfur cluster is required as a cofactor.

In terms of biological role, required for insertion of 4Fe-4S clusters for at least IspG. The protein is Iron-sulfur cluster insertion protein ErpA of Xylella fastidiosa (strain M23).